A 232-amino-acid chain; its full sequence is 26S proteasome non-ATPase regulatory subunit 10 (232 aa).

6 ANK repeats span residues 45-75 (DERT…SPNT), 79-108 (GGWT…DPNT), 112-141 (SKRT…KNRK), 144-173 (TGSA…NINS), 177-206 (EGDT…DTTI), and 210-232 (DSKT…EFKK).

Functionally, acts as a chaperone during the assembly of the 26S proteasome, specifically of the 19S regulatory complex (RC). In Dictyostelium discoideum (Social amoeba), this protein is 26S proteasome non-ATPase regulatory subunit 10 (psmD10).